The sequence spans 250 residues: MADS-box protein J2 (250 aa).

The 61-residue stretch at 1-61 (MGRGRVELKR…GKLYEFSSAS (61 aa)) folds into the MADS-box domain. The K-box domain maps to 87–177 (TQMNYNEYVR…KNKLEESAAR (91 aa)).

The protein resides in the nucleus. Its function is as follows. MADS-box transcription factor that acts redundantly with EJ2 to control meristem maturation and inflorescence architecture. This Solanum lycopersicum (Tomato) protein is MADS-box protein J2.